The primary structure comprises 761 residues: Probable ATP-dependent RNA helicase DDX20 (761 aa).

A Q motif motif is present at residues 26-54 (VEFSSLLLSKPVLEGLSASGFQRPSPIQL). ATP is bound by residues arginine 48, glutamine 53, 70–77 (AKSGTGKT), and 73–78 (GTGKTC). A Helicase ATP-binding domain is found at 57-231 (IPLGRCGLDL…SRYMREPTFV (175 aa)). The DEAD box signature appears at 175-178 (DEAD). Positions 266–415 (SLLELFSKIP…PIPPGIMEEA (150 aa)) constitute a Helicase C-terminal domain. 2 disordered regions span residues 428–525 (PKIP…KSHT) and 570–720 (HDAH…EAGQ). The segment covering 443-456 (KSEQMKSKPSRESH) has biased composition (basic and acidic residues). Over residues 498-512 (QHDSTITQKQQNNTL) the composition is skewed to polar residues. 2 stretches are compositionally biased toward low complexity: residues 600–613 (SELS…SESS) and 623–635 (ESSS…STLE). Residues 655-679 (TLPSTRVPQQATRSKQKPCQPQSQD) show a composition bias toward polar residues. Residues 683-707 (HHNLPHKHRTASKSSRRPTGPKRRT) show a composition bias toward basic residues.

The protein belongs to the DEAD box helicase family. DDX20 subfamily. In terms of assembly, part of the core SMN complex.

Its subcellular location is the cytoplasm. The protein localises to the nucleus. It carries out the reaction ATP + H2O = ADP + phosphate + H(+). It catalyses the reaction a ribonucleoside 5'-triphosphate + H2O = a ribonucleoside 5'-diphosphate + phosphate + H(+). Functionally, the SMN complex catalyzes the assembly of small nuclear ribonucleoproteins (snRNPs), the building blocks of the spliceosome, and thereby plays an important role in the splicing of cellular pre-mRNAs. Most spliceosomal snRNPs contain a common set of Sm proteins SNRPB, SNRPD1, SNRPD2, SNRPD3, SNRPE, SNRPF and SNRPG that assemble in a heptameric protein ring on the Sm site of the small nuclear RNA to form the core snRNP (Sm core). In the cytosol, the Sm proteins SNRPD1, SNRPD2, SNRPE, SNRPF and SNRPG are trapped in an inactive 6S pICln-Sm complex by the chaperone CLNS1A that controls the assembly of the core snRNP. To assemble core snRNPs, the SMN complex accepts the trapped 5Sm proteins from CLNS1A forming an intermediate. Binding of snRNA inside 5Sm triggers eviction of the SMN complex, thereby allowing binding of SNRPD3 and SNRPB to complete assembly of the core snRNP. May also play a role in the metabolism of small nucleolar ribonucleoprotein (snoRNPs). This chain is Probable ATP-dependent RNA helicase DDX20 (ddx20), found in Danio rerio (Zebrafish).